A 461-amino-acid chain; its full sequence is Cysteine--tRNA ligase (461 aa).

Zn(2+) is bound at residue cysteine 28. The 'HIGH' region signature appears at 30–40 (VTIYDLCHIGH). Zn(2+)-binding residues include cysteine 209, histidine 234, and glutamate 238. A 'KMSKS' region motif is present at residues 266–270 (KMSKS). Residue lysine 269 coordinates ATP.

The protein belongs to the class-I aminoacyl-tRNA synthetase family. As to quaternary structure, monomer. It depends on Zn(2+) as a cofactor.

The protein resides in the cytoplasm. It catalyses the reaction tRNA(Cys) + L-cysteine + ATP = L-cysteinyl-tRNA(Cys) + AMP + diphosphate. This Vibrio atlanticus (strain LGP32) (Vibrio splendidus (strain Mel32)) protein is Cysteine--tRNA ligase.